The primary structure comprises 208 residues: MKIVEVKHPLVKHKLGLMRENDISTKRFRELASEVGSLLTYVATADLETEKVTIEGWNGPVEIEQIKGKKITVVPILRAGLGMMEGVLENVPSARISVVGVYRDEETLKPVPYFQKLVSNIDERMALVVDPMLATGGSMIATIDLLKKAGCKSIKVLVLVAAPEGIKALEAAHPDVELYTASIDQGLNEHGYIIPGLGDAGDKIFGTK.

5-phospho-alpha-D-ribose 1-diphosphate contacts are provided by residues arginine 78, arginine 103, and 130 to 138 (DPMLATGGS). Residues isoleucine 193 and 198–200 (GDA) each bind uracil. Aspartate 199 serves as a coordination point for 5-phospho-alpha-D-ribose 1-diphosphate.

It belongs to the UPRTase family. Requires Mg(2+) as cofactor.

The catalysed reaction is UMP + diphosphate = 5-phospho-alpha-D-ribose 1-diphosphate + uracil. The protein operates within pyrimidine metabolism; UMP biosynthesis via salvage pathway; UMP from uracil: step 1/1. Its activity is regulated as follows. Allosterically activated by GTP. Its function is as follows. Catalyzes the conversion of uracil and 5-phospho-alpha-D-ribose 1-diphosphate (PRPP) to UMP and diphosphate. This chain is Uracil phosphoribosyltransferase, found in Yersinia enterocolitica serotype O:8 / biotype 1B (strain NCTC 13174 / 8081).